Consider the following 337-residue polypeptide: DNA-directed RNA polymerase subunit alpha (337 aa).

The segment at 1–231 is alpha N-terminal domain (alpha-NTD); sequence MRNITISAYT…KQLSVFDKIT (231 aa). The alpha C-terminal domain (alpha-CTD) stretch occupies residues 248 to 337; the sequence is NTKLLQNITD…IAELKAQNEG (90 aa).

This sequence belongs to the RNA polymerase alpha chain family. Homodimer. The RNAP catalytic core consists of 2 alpha, 1 beta, 1 beta' and 1 omega subunit. When a sigma factor is associated with the core the holoenzyme is formed, which can initiate transcription.

The enzyme catalyses RNA(n) + a ribonucleoside 5'-triphosphate = RNA(n+1) + diphosphate. DNA-dependent RNA polymerase catalyzes the transcription of DNA into RNA using the four ribonucleoside triphosphates as substrates. In Campylobacter jejuni subsp. doylei (strain ATCC BAA-1458 / RM4099 / 269.97), this protein is DNA-directed RNA polymerase subunit alpha.